Consider the following 354-residue polypeptide: Uroporphyrinogen decarboxylase (354 aa).

Substrate is bound by residues 25-29, Asp75, Tyr152, Thr207, and His330; that span reads RQAGR.

The protein belongs to the uroporphyrinogen decarboxylase family. As to quaternary structure, homodimer.

The protein resides in the cytoplasm. It carries out the reaction uroporphyrinogen III + 4 H(+) = coproporphyrinogen III + 4 CO2. It participates in porphyrin-containing compound metabolism; protoporphyrin-IX biosynthesis; coproporphyrinogen-III from 5-aminolevulinate: step 4/4. Its function is as follows. Catalyzes the decarboxylation of four acetate groups of uroporphyrinogen-III to yield coproporphyrinogen-III. The polypeptide is Uroporphyrinogen decarboxylase (Xanthomonas campestris pv. campestris (strain 8004)).